Here is a 234-residue protein sequence, read N- to C-terminus: Proteasome subunit alpha type-2 (234 aa).

Residue Ala-2 is modified to N-acetylalanine. Tyr-6 is subject to Phosphotyrosine. Residues Ser-7, Ser-14, and Ser-16 each carry the phosphoserine modification. A Phosphotyrosine modification is found at Tyr-24. An N6-acetyllysine modification is found at Lys-70. Tyr-76 and Tyr-121 each carry phosphotyrosine. Lys-171 carries the post-translational modification N6-acetyllysine.

It belongs to the peptidase T1A family. As to quaternary structure, the 26S proteasome consists of a 20S proteasome core and two 19S regulatory subunits. The 20S proteasome core is a barrel-shaped complex made of 28 subunits that are arranged in four stacked rings. The two outer rings are each formed by seven alpha subunits, and the two inner rings are formed by seven beta subunits. The proteolytic activity is exerted by three beta-subunits PSMB5, PSMB6 and PSMB7. Post-translationally, phosphorylated on tyrosine residues; which may be important for nuclear import. As to expression, detected in liver (at protein level).

It localises to the cytoplasm. Its subcellular location is the nucleus. Component of the 20S core proteasome complex involved in the proteolytic degradation of most intracellular proteins. This complex plays numerous essential roles within the cell by associating with different regulatory particles. Associated with two 19S regulatory particles, forms the 26S proteasome and thus participates in the ATP-dependent degradation of ubiquitinated proteins. The 26S proteasome plays a key role in the maintenance of protein homeostasis by removing misfolded or damaged proteins that could impair cellular functions, and by removing proteins whose functions are no longer required. Associated with the PA200 or PA28, the 20S proteasome mediates ubiquitin-independent protein degradation. This type of proteolysis is required in several pathways including spermatogenesis (20S-PA200 complex) or generation of a subset of MHC class I-presented antigenic peptides (20S-PA28 complex). In Mus musculus (Mouse), this protein is Proteasome subunit alpha type-2 (Psma2).